The sequence spans 616 residues: Chaperone protein HscA (616 aa).

The protein belongs to the heat shock protein 70 family.

Its function is as follows. Chaperone involved in the maturation of iron-sulfur cluster-containing proteins. Has a low intrinsic ATPase activity which is markedly stimulated by HscB. Involved in the maturation of IscU. This Shigella flexneri serotype 5b (strain 8401) protein is Chaperone protein HscA.